The chain runs to 122 residues: Large ribosomal subunit protein bL12 (122 aa).

It belongs to the bacterial ribosomal protein bL12 family. As to quaternary structure, homodimer. Part of the ribosomal stalk of the 50S ribosomal subunit. Forms a multimeric L10(L12)X complex, where L10 forms an elongated spine to which 2 to 4 L12 dimers bind in a sequential fashion. Binds GTP-bound translation factors.

In terms of biological role, forms part of the ribosomal stalk which helps the ribosome interact with GTP-bound translation factors. Is thus essential for accurate translation. The polypeptide is Large ribosomal subunit protein bL12 (Sulfurimonas denitrificans (strain ATCC 33889 / DSM 1251) (Thiomicrospira denitrificans (strain ATCC 33889 / DSM 1251))).